A 394-amino-acid polypeptide reads, in one-letter code: Aspergillopepsin-1 (394 aa).

The N-terminal stretch at 1 to 20 is a signal peptide; the sequence is MVVFSKTAALVLGLSTAVSA. Residues 21–69 constitute a propeptide, activation peptide; it reads APAPTRKGFTINQIARPANKTRTVNLPGLYARSLAKFGGTVPQSVKEAA. Residues 85–391 enclose the Peptidase A1 domain; that stretch reads YLTPVTVGKS…NSEGPKLGFA (307 aa). D101 is an active-site residue. Residues S129 and S304 are each glycosylated (O-linked (Man...) serine). The cysteines at positions 319 and 354 are disulfide-linked.

It belongs to the peptidase A1 family. In terms of assembly, monomer.

Its subcellular location is the secreted. The enzyme catalyses Hydrolysis of proteins with broad specificity. Generally favors hydrophobic residues in P1 and P1', but also accepts Lys in P1, which leads to activation of trypsinogen. Does not clot milk.. In terms of biological role, secreted aspartic endopeptidase that allows assimilation of proteinaceous substrates. The scissile peptide bond is attacked by a nucleophilic water molecule activated by two aspartic residues in the active site. Shows a broad primary substrate specificity. Favors hydrophobic residues at the P1 and P1' positions, but also accepts a lysine residue in the P1 position, leading to the activation of trypsinogen and chymotrypsinogen A. The protein is Aspergillopepsin-1 (pepA) of Aspergillus phoenicis (Aspergillus saitoi).